Here is a 700-residue protein sequence, read N- to C-terminus: Serine/threonine-protein kinase WNK1 (700 aa).

One can recognise a Protein kinase domain in the interval 24–281 (GRYNEVLGKG…ARELLDDPFL (258 aa)). Residues 104–107 (TELF) and lysine 154 each bind ATP. Catalysis depends on aspartate 171, which acts as the Proton acceptor. Residues 314 to 339 (NYPSNSSSLNRQYSNGNYPSNSSSLN) show a composition bias toward low complexity. Disordered regions lie at residues 314–345 (NYPSNSSSLNRQYSNGNYPSNSSSLNRQYSNG), 551–575 (ESRELSSIDSGHNHSEEEEEEEVLY), and 647–666 (ESGEEVEISPKDGFLGSVSG). The segment covering 551–565 (ESRELSSIDSGHNHS) has biased composition (basic and acidic residues). Positions 566–575 (EEEEEEEVLY) are enriched in acidic residues.

The protein belongs to the protein kinase superfamily. Ser/Thr protein kinase family. WNK subfamily. Autophosphorylated.

It carries out the reaction L-seryl-[protein] + ATP = O-phospho-L-seryl-[protein] + ADP + H(+). The catalysed reaction is L-threonyl-[protein] + ATP = O-phospho-L-threonyl-[protein] + ADP + H(+). Functionally, regulates flowering time by modulating the photoperiod pathway. Phosphorylates APRR3. The polypeptide is Serine/threonine-protein kinase WNK1 (WNK1) (Arabidopsis thaliana (Mouse-ear cress)).